Here is a 453-residue protein sequence, read N- to C-terminus: Homeobox protein meis3 (453 aa).

Residues 33-64 (HHSLSQSAPYGSTGAAHRVPMPPGMGSNDGLK) are disordered. The region spanning 102-185 (GGDVCSSDSF…PIDLVIDDRD (84 aa)) is the MEIS N-terminal domain. Residues 192 to 272 (LEDFTGSCTS…RDKKRNKKRG (81 aa)) are disordered. Polar residues predominate over residues 197 to 209 (GSCTSLSDQNNSW). Low complexity predominate over residues 218 to 230 (STHSGTPGPSSGG). Polar residues predominate over residues 231-242 (LASQSGDNSSEQ). A DNA-binding region (homeobox) is located at residues 267–329 (RNKKRGIFPK…NARRRIVQPM (63 aa)).

This sequence belongs to the TALE/MEIS homeobox family.

The protein localises to the nucleus. A caudalizing protein which is required to pattern the anterior/posterior (A/P) axis during central nervous system (CNS) formation. Inhibits anterior neural expression and acts as a transcriptional activator to induce posterior neural gene expression. Maintains a proper A/P balance required for hindbrain formation by activating the FGF/MAPK pathway, which modulates the planar cell polarity (PCP) pathway. Interacts with retinoid signaling during hindbrain patterning. This Xenopus tropicalis (Western clawed frog) protein is Homeobox protein meis3.